Here is a 223-residue protein sequence, read N- to C-terminus: Thiamine-phosphate synthase (223 aa).

Residues 37–41 (QFREK) and Asp72 each bind 4-amino-2-methyl-5-(diphosphooxymethyl)pyrimidine. Residues Asp73 and Asp92 each contribute to the Mg(2+) site. Position 110 (Ser110) interacts with 4-amino-2-methyl-5-(diphosphooxymethyl)pyrimidine. Position 136 to 138 (136 to 138 (TQS)) interacts with 2-[(2R,5Z)-2-carboxy-4-methylthiazol-5(2H)-ylidene]ethyl phosphate. Residue Lys139 participates in 4-amino-2-methyl-5-(diphosphooxymethyl)pyrimidine binding. Residues Gly168 and 188 to 189 (IS) contribute to the 2-[(2R,5Z)-2-carboxy-4-methylthiazol-5(2H)-ylidene]ethyl phosphate site.

This sequence belongs to the thiamine-phosphate synthase family. Requires Mg(2+) as cofactor.

The enzyme catalyses 2-[(2R,5Z)-2-carboxy-4-methylthiazol-5(2H)-ylidene]ethyl phosphate + 4-amino-2-methyl-5-(diphosphooxymethyl)pyrimidine + 2 H(+) = thiamine phosphate + CO2 + diphosphate. It carries out the reaction 2-(2-carboxy-4-methylthiazol-5-yl)ethyl phosphate + 4-amino-2-methyl-5-(diphosphooxymethyl)pyrimidine + 2 H(+) = thiamine phosphate + CO2 + diphosphate. The catalysed reaction is 4-methyl-5-(2-phosphooxyethyl)-thiazole + 4-amino-2-methyl-5-(diphosphooxymethyl)pyrimidine + H(+) = thiamine phosphate + diphosphate. It participates in cofactor biosynthesis; thiamine diphosphate biosynthesis; thiamine phosphate from 4-amino-2-methyl-5-diphosphomethylpyrimidine and 4-methyl-5-(2-phosphoethyl)-thiazole: step 1/1. In terms of biological role, condenses 4-methyl-5-(beta-hydroxyethyl)thiazole monophosphate (THZ-P) and 2-methyl-4-amino-5-hydroxymethyl pyrimidine pyrophosphate (HMP-PP) to form thiamine monophosphate (TMP). The chain is Thiamine-phosphate synthase from Streptococcus agalactiae serotype Ia (strain ATCC 27591 / A909 / CDC SS700).